Consider the following 466-residue polypeptide: Zinc metalloproteinase/disintegrin (466 aa).

The signal sequence occupies residues 1 to 6 (FPYQGS). Residues 7–174 (SIILESGNVN…PIKKASQLIV (168 aa)) constitute a propeptide that is removed on maturation. One can recognise a Peptidase M12B domain in the interval 180–377 (RYMEIVIVVD…ENPPCILNKP (198 aa)). E183 and D267 together coordinate Ca(2+). Disulfide bonds link C291–C372, C331–C356, and C333–C339. Residue H316 coordinates Zn(2+). The active site involves E317. The Zn(2+) site is built by H320 and H326. Residues C372 and N375 each coordinate Ca(2+). Residues 377–401 (PLRTDTVSTPVSGNELLEAGKDYDR) constitute a propeptide that is removed on maturation. The Disintegrin domain occupies 385–466 (TPVSGNELLE…GDCPRNPYHA (82 aa)). Cystine bridges form between C422–C428, C427–C452, and C440–C459. Residues 444-446 (RGD) carry the Cell attachment site motif.

Belongs to the venom metalloproteinase (M12B) family. P-II subfamily. P-IIa sub-subfamily. As to quaternary structure, monomer. It depends on Zn(2+) as a cofactor. In terms of tissue distribution, expressed by the venom gland.

Its subcellular location is the secreted. Functionally, impairs hemostasis in the envenomed animal. In terms of biological role, inhibits platelet aggregation induced by ADP, thrombin, platelet-activating factor and collagen. Acts by inhibiting fibrinogen interaction with platelet receptors GPIIb/GPIIIa (ITGA2B/ITGB3). This Deinagkistrodon acutus (Hundred-pace snake) protein is Zinc metalloproteinase/disintegrin.